We begin with the raw amino-acid sequence, 674 residues long: Translation factor GUF1, mitochondrial (674 aa).

Residues 1-33 (MLRPWFCFRSCVSLLSNRRQYGFRYLATAEPSK) constitute a mitochondrion transit peptide. The segment at 32–51 (SKSEKPAKPVKPAKPMSVQE) is disordered. The tr-type G domain maps to 75 to 257 (QNYRNFSIVA…SIIKNIPAPV (183 aa)). Residues 84-91 (AHVDHGKS), 150-154 (DTPGH), and 204-207 (NKID) contribute to the GTP site.

Belongs to the TRAFAC class translation factor GTPase superfamily. Classic translation factor GTPase family. LepA subfamily.

It is found in the mitochondrion inner membrane. The catalysed reaction is GTP + H2O = GDP + phosphate + H(+). Its function is as follows. Promotes mitochondrial protein synthesis. May act as a fidelity factor of the translation reaction, by catalyzing a one-codon backward translocation of tRNAs on improperly translocated ribosomes. Binds to mitochondrial ribosomes in a GTP-dependent manner. This Lodderomyces elongisporus (strain ATCC 11503 / CBS 2605 / JCM 1781 / NBRC 1676 / NRRL YB-4239) (Yeast) protein is Translation factor GUF1, mitochondrial.